Here is a 169-residue protein sequence, read N- to C-terminus: GTP-dependent dephospho-CoA kinase (169 aa).

Residues Asp-45, Asp-64, Lys-66, and Glu-121 each contribute to the GTP site.

It belongs to the GTP-dependent DPCK family.

The catalysed reaction is 3'-dephospho-CoA + GTP = GDP + CoA + H(+). It participates in cofactor biosynthesis; coenzyme A biosynthesis. Its function is as follows. Catalyzes the GTP-dependent phosphorylation of the 3'-hydroxyl group of dephosphocoenzyme A to form coenzyme A (CoA). The protein is GTP-dependent dephospho-CoA kinase of Methanosphaera stadtmanae (strain ATCC 43021 / DSM 3091 / JCM 11832 / MCB-3).